The chain runs to 873 residues: Nonsense-mediated mRNA decay factor SMG8 (873 aa).

The tract at residues A531 to E604 is disordered. Residues E540 to I550 are compositionally biased toward acidic residues. Composition is skewed to low complexity over residues P551–P562 and S574–S583. The span at S591–E604 shows a compositional bias: basic and acidic residues.

Belongs to the SMG8 family.

Involved in nonsense-mediated decay (NMD) of mRNAs containing premature stop codons. Probable component of kinase complex containing smg-1 and recruited to stalled ribosomes. This is Nonsense-mediated mRNA decay factor SMG8 (smg-8) from Caenorhabditis elegans.